The following is a 434-amino-acid chain: Pyrichalasin H cluster regulator BC2 (434 aa).

Disordered regions lie at residues 297–321 (GSSPSGTPESELTSPHKRATTCSPL) and 362–383 (HPGHEDHQQQQEEVKQHDRLSH). The span at 298–309 (SSPSGTPESELT) shows a compositional bias: polar residues. Residues 362-380 (HPGHEDHQQQQEEVKQHDR) are compositionally biased toward basic and acidic residues.

It localises to the nucleus. Its function is as follows. Transcription factor probably involved in regulation of gene cluster that mediates the biosynthesis of a tyrosine-derived cytochalasan acting as a fungal signal recognized by resistant rice plants and leads to avirulence in Pi33 resistant rice cultivars. This is Pyrichalasin H cluster regulator BC2 from Pyricularia oryzae (strain 70-15 / ATCC MYA-4617 / FGSC 8958) (Rice blast fungus).